The primary structure comprises 295 residues: Aspartate carbamoyltransferase catalytic subunit (295 aa).

Residues arginine 49 and threonine 50 each coordinate carbamoyl phosphate. Residue lysine 77 coordinates L-aspartate. Residues arginine 99, histidine 127, and glutamine 130 each contribute to the carbamoyl phosphate site. Arginine 161 and arginine 212 together coordinate L-aspartate. Residues glycine 251 and proline 252 each contribute to the carbamoyl phosphate site.

It belongs to the aspartate/ornithine carbamoyltransferase superfamily. ATCase family. Heterododecamer (2C3:3R2) of six catalytic PyrB chains organized as two trimers (C3), and six regulatory PyrI chains organized as three dimers (R2).

It carries out the reaction carbamoyl phosphate + L-aspartate = N-carbamoyl-L-aspartate + phosphate + H(+). It participates in pyrimidine metabolism; UMP biosynthesis via de novo pathway; (S)-dihydroorotate from bicarbonate: step 2/3. Its function is as follows. Catalyzes the condensation of carbamoyl phosphate and aspartate to form carbamoyl aspartate and inorganic phosphate, the committed step in the de novo pyrimidine nucleotide biosynthesis pathway. This chain is Aspartate carbamoyltransferase catalytic subunit, found in Aliarcobacter butzleri (strain RM4018) (Arcobacter butzleri).